Consider the following 197-residue polypeptide: Xanthine phosphoribosyltransferase (197 aa).

Xanthine-binding residues include Leu20 and Asn27. Ala128–Ala132 is a binding site for 5-phospho-alpha-D-ribose 1-diphosphate. Residue Lys156 participates in xanthine binding.

Belongs to the purine/pyrimidine phosphoribosyltransferase family. Xpt subfamily. As to quaternary structure, homodimer.

It localises to the cytoplasm. The catalysed reaction is XMP + diphosphate = xanthine + 5-phospho-alpha-D-ribose 1-diphosphate. It participates in purine metabolism; XMP biosynthesis via salvage pathway; XMP from xanthine: step 1/1. Converts the preformed base xanthine, a product of nucleic acid breakdown, to xanthosine 5'-monophosphate (XMP), so it can be reused for RNA or DNA synthesis. This Bacillus cereus (strain ATCC 10987 / NRS 248) protein is Xanthine phosphoribosyltransferase.